A 660-amino-acid chain; its full sequence is DNA mismatch repair protein MutL (660 aa).

The segment at 414–433 is disordered; it reads SSVKHASRPQNTFTETDHPN.

Belongs to the DNA mismatch repair MutL/HexB family.

Functionally, this protein is involved in the repair of mismatches in DNA. It is required for dam-dependent methyl-directed DNA mismatch repair. May act as a 'molecular matchmaker', a protein that promotes the formation of a stable complex between two or more DNA-binding proteins in an ATP-dependent manner without itself being part of a final effector complex. This chain is DNA mismatch repair protein MutL, found in Streptococcus pyogenes serotype M6 (strain ATCC BAA-946 / MGAS10394).